A 100-amino-acid chain; its full sequence is MNRLSASERQAALRELPGWLELEEREAIGRSYQFKDFSEAFGFMTRVALAAEKADHHPEWRNVYRTVDVVLTTHDAGGVTERDVKLAKAMDAIAERCGAR.

Belongs to the pterin-4-alpha-carbinolamine dehydratase family.

It catalyses the reaction (4aS,6R)-4a-hydroxy-L-erythro-5,6,7,8-tetrahydrobiopterin = (6R)-L-erythro-6,7-dihydrobiopterin + H2O. This Rhodopseudomonas palustris (strain ATCC BAA-98 / CGA009) protein is Putative pterin-4-alpha-carbinolamine dehydratase.